A 45-amino-acid chain; its full sequence is DNA-directed RNA polymerase subunit Rpo12 (45 aa).

The Zn(2+) site is built by cysteine 8, cysteine 23, and cysteine 26.

It belongs to the archaeal Rpo12/eukaryotic RPC10 RNA polymerase subunit family. Part of the RNA polymerase complex. Zn(2+) is required as a cofactor.

The protein resides in the cytoplasm. It carries out the reaction RNA(n) + a ribonucleoside 5'-triphosphate = RNA(n+1) + diphosphate. Functionally, DNA-dependent RNA polymerase (RNAP) catalyzes the transcription of DNA into RNA using the four ribonucleoside triphosphates as substrates. This chain is DNA-directed RNA polymerase subunit Rpo12, found in Methanothrix thermoacetophila (strain DSM 6194 / JCM 14653 / NBRC 101360 / PT) (Methanosaeta thermophila).